A 443-amino-acid chain; its full sequence is Xaa-Pro dipeptidase (443 aa).

Mn(2+) contacts are provided by Asp-246, Asp-257, His-339, Glu-384, and Glu-423.

It belongs to the peptidase M24B family. Bacterial-type prolidase subfamily. Requires Mn(2+) as cofactor.

It catalyses the reaction Xaa-L-Pro dipeptide + H2O = an L-alpha-amino acid + L-proline. Functionally, splits dipeptides with a prolyl residue in the C-terminal position. The protein is Xaa-Pro dipeptidase of Escherichia coli (strain 55989 / EAEC).